The primary structure comprises 514 residues: Nitric oxide reductase transcription regulator NorR1 (514 aa).

Asp-54 is modified (4-aspartylphosphate). The Sigma-54 factor interaction domain occupies 187–416 (IIGQSQAIAG…LEHVISRAAL (230 aa)). ATP is bound by residues 215–222 (GETGVGKE) and 287–296 (EVGELPLSIQ). Positions 490–509 (WAKAARQLGMDASNLHKLAK) form a DNA-binding region, H-T-H motif.

It functions in the pathway nitrogen metabolism; nitrate reduction (denitrification) [regulation]. Its function is as follows. Required for the nitric oxide (NO) induced expression of NO reductase. Not required for expression of 2 other pathway members, nitrate reductase (nirS) and nitrous oxide reductase (nosZ). The protein is Nitric oxide reductase transcription regulator NorR1 (norR1) of Cupriavidus necator (strain ATCC 17699 / DSM 428 / KCTC 22496 / NCIMB 10442 / H16 / Stanier 337) (Ralstonia eutropha).